The chain runs to 233 residues: UPF0758 protein Rcas_0037 (233 aa).

An MPN domain is found at 107 to 229; it reads QIRSPTDAAQ…FVSMRERGLA (123 aa). Residues His178, His180, and Asp191 each contribute to the Zn(2+) site. The short motif at 178–191 is the JAMM motif element; the sequence is HNHPSGDPTPSPED.

This sequence belongs to the UPF0758 family.

The sequence is that of UPF0758 protein Rcas_0037 from Roseiflexus castenholzii (strain DSM 13941 / HLO8).